Here is a 307-residue protein sequence, read N- to C-terminus: Acetaldehyde dehydrogenase 1 (307 aa).

The active-site Acyl-thioester intermediate is cysteine 132. Residues 163–171 (SVGPGTRKN) and asparagine 274 each bind NAD(+).

The protein belongs to the acetaldehyde dehydrogenase family.

The enzyme catalyses acetaldehyde + NAD(+) + CoA = acetyl-CoA + NADH + H(+). The sequence is that of Acetaldehyde dehydrogenase 1 (tesF) from Comamonas testosteroni (Pseudomonas testosteroni).